The sequence spans 151 residues: SsrA-binding protein (151 aa).

The protein belongs to the SmpB family.

It is found in the cytoplasm. Required for rescue of stalled ribosomes mediated by trans-translation. Binds to transfer-messenger RNA (tmRNA), required for stable association of tmRNA with ribosomes. tmRNA and SmpB together mimic tRNA shape, replacing the anticodon stem-loop with SmpB. tmRNA is encoded by the ssrA gene; the 2 termini fold to resemble tRNA(Ala) and it encodes a 'tag peptide', a short internal open reading frame. During trans-translation Ala-aminoacylated tmRNA acts like a tRNA, entering the A-site of stalled ribosomes, displacing the stalled mRNA. The ribosome then switches to translate the ORF on the tmRNA; the nascent peptide is terminated with the 'tag peptide' encoded by the tmRNA and targeted for degradation. The ribosome is freed to recommence translation, which seems to be the essential function of trans-translation. The sequence is that of SsrA-binding protein from Chlamydia trachomatis serovar A (strain ATCC VR-571B / DSM 19440 / HAR-13).